Reading from the N-terminus, the 578-residue chain is MAQRFITLILLLCSILLAPHSAQASLFGDNSSFGQKSSQSRFIPVDQAFAFDFRQQGDQLALSWQIHPDYYLYRQQIKIVPNNATFGAFTLPEGIAHRDEFYGEVAIFKQQLTLKIPITQAGERASVSVTYQGCAEAGFCYPPETRVVPLSAITAGSSAVTAPPIAAPATPAPAELPFSPLWALLIGIGIAFTPCVLPMYPLISAIILGREKPHSQRRILLLAIVYVQGMALTYTLLGLVVAAAGLQFQAALQHPYVLIGLSALFVLLALSMFGLYSLQLPSSLQTRLVQWSSSQRGGSLAGVFAMGALAGLICSPCTTAPLSAILLYIAQSGNMLAGGGTLYLYALGMGIPLVIVTLFGNKLLPRSGPWMQYVKEAFGFVILALPVFLLERVLGDVWGLRLWSLLAIAFFGWAFILSLKAHSGWARAFQLLLLAALLIAARPLQDWAFGSPTQQSEIKHLAFKQVADLPQLQAALAQAKGKPVMLDLYADWCVACKEFEKYTFSDEQVQRQLADTVLLQADVTANSAEHAALLKELNVLGLPTILFFDAPGNEIPAARVTGFMNASGFLQHLQNLPR.

The N-terminal stretch at 1–24 is a signal peptide; that stretch reads MAQRFITLILLLCSILLAPHSAQA. Cystine bridges form between cysteine 134-cysteine 140 and cysteine 195-cysteine 317. Helical transmembrane passes span 183-203, 219-239, 256-276, 297-317, 318-338, 339-359, 370-390, 397-417, and 421-441; these read ALLI…YPLI, ILLL…LLGL, YVLI…FGLY, GGSL…CSPC, TTAP…MLAG, GGTL…VTLF, WMQY…VFLL, VWGL…AFIL, and AHSG…LIAA. Residues 438-578 enclose the Thioredoxin domain; the sequence is LIAARPLQDW…FLQHLQNLPR (141 aa). Cysteine 493 and cysteine 496 are joined by a disulfide.

This sequence belongs to the thioredoxin family. DsbD subfamily.

The protein localises to the cell inner membrane. The catalysed reaction is [protein]-dithiol + NAD(+) = [protein]-disulfide + NADH + H(+). The enzyme catalyses [protein]-dithiol + NADP(+) = [protein]-disulfide + NADPH + H(+). Its function is as follows. Required to facilitate the formation of correct disulfide bonds in some periplasmic proteins and for the assembly of the periplasmic c-type cytochromes. Acts by transferring electrons from cytoplasmic thioredoxin to the periplasm. This transfer involves a cascade of disulfide bond formation and reduction steps. In Yersinia enterocolitica serotype O:8 / biotype 1B (strain NCTC 13174 / 8081), this protein is Thiol:disulfide interchange protein DsbD.